Reading from the N-terminus, the 386-residue chain is DNA (cytosine-5)-methyltransferase 3-like (386 aa).

The ADD domain occupies 41-173; the sequence is EVKANQRNIE…LKAFYDRESE (133 aa). Residues 52-82 form a GATA-type; atypical zinc finger; that stretch reads ICICCGSLQVHTQHPLFEGGICAPCKDKFLD. The segment at 93–149 adopts a PHD-type; atypical zinc-finger fold; sequence QSYCSICCSGETLLICGNPDCTRCYCFECVDSLVGPGTSGKVHAMSNWVCYLCLPSS.

In terms of assembly, homodimer. Heterotetramer composed of 1 DNMT3A homodimer and 2 DNMT3L subunits (DNMT3L-DNMT3A-DNMT3A-DNMT3L). Interacts with histone H3 (via N-terminus); interaction is strongly inhibited by methylation at lysine 4 (H3K4me). Interacts with EZH2; the interaction is direct. Interacts with SPOCD1. As to expression, expressed at low levels in several tissues including testis, ovary, and thymus.

The protein localises to the nucleus. In terms of biological role, catalytically inactive regulatory factor of DNA methyltransferases that can either promote or inhibit DNA methylation depending on the context. Essential for the function of DNMT3A and DNMT3B: activates DNMT3A and DNMT3B by binding to their catalytic domain. Acts by accelerating the binding of DNA and S-adenosyl-L-methionine (AdoMet) to the methyltransferases and dissociates from the complex after DNA binding to the methyltransferases. Recognizes unmethylated histone H3 lysine 4 (H3K4me0) and induces de novo DNA methylation by recruitment or activation of DNMT3. Plays a key role in embryonic stem cells and germ cells. In germ cells, required for the methylation of imprinted loci together with DNMT3A. In male germ cells, specifically required to methylate retrotransposons, preventing their mobilization. Plays a key role in embryonic stem cells (ESCs) by acting both as an positive and negative regulator of DNA methylation. While it promotes DNA methylation of housekeeping genes together with DNMT3A and DNMT3B, it also acts as an inhibitor of DNA methylation at the promoter of bivalent genes. Interacts with the EZH2 component of the PRC2/EED-EZH2 complex, preventing interaction of DNMT3A and DNMT3B with the PRC2/EED-EZH2 complex, leading to maintain low methylation levels at the promoters of bivalent genes. Promotes differentiation of ESCs into primordial germ cells by inhibiting DNA methylation at the promoter of RHOX5, thereby activating its expression. The chain is DNA (cytosine-5)-methyltransferase 3-like (DNMT3L) from Homo sapiens (Human).